A 329-amino-acid polypeptide reads, in one-letter code: Alpha/beta hydrolase domain-containing protein 17C (329 aa).

Low complexity predominate over residues 53-79; the sequence is GASAPAPAQATAAAAAAQPAPQQPEEG. The tract at residues 53-85 is disordered; the sequence is GASAPAPAQATAAAAAAQPAPQQPEEGAGAGPG. Active-site charge relay system residues include Ser211, Asp276, and His305.

Belongs to the AB hydrolase superfamily. ABHD17 family. In terms of processing, palmitoylated on cysteine residues located in a cysteine cluster at the N-terminus which promotes membrane localization. Palmitoylation is required for post-synaptic localization and for depalmitoylating activity towards DLG4/PSD95.

Its subcellular location is the recycling endosome membrane. The protein resides in the cell projection. It localises to the dendritic spine. It is found in the postsynaptic density membrane. It catalyses the reaction S-hexadecanoyl-L-cysteinyl-[protein] + H2O = L-cysteinyl-[protein] + hexadecanoate + H(+). With respect to regulation, inhibited by palmostatin-B. In terms of biological role, hydrolyzes fatty acids from S-acylated cysteine residues in proteins. Has depalmitoylating activity towards NRAS and DLG4/PSD95. This chain is Alpha/beta hydrolase domain-containing protein 17C, found in Homo sapiens (Human).